A 147-amino-acid polypeptide reads, in one-letter code: Hemoglobin subunit epsilon (147 aa).

Positions 3 to 147 (HFTAEEKAAI…VAIALGHKYH (145 aa)) constitute a Globin domain. Phosphoserine occurs at positions 14 and 51. Histidine 64 and histidine 93 together coordinate heme b.

The protein belongs to the globin family. As to quaternary structure, heterotetramer of two alpha chains and two epsilon chains in early embryonic hemoglobin Gower-2; two zeta chains and two epsilon chains in early embryonic hemoglobin Gower-1. Red blood cells.

Its function is as follows. The epsilon chain is a beta-type chain of early mammalian embryonic hemoglobin. In Leontopithecus rosalia (Golden lion tamarin), this protein is Hemoglobin subunit epsilon (HBE1).